Here is a 314-residue protein sequence, read N- to C-terminus: Glycerol-1-phosphate dehydrogenase [NAD(P)+] (314 aa).

NAD(+) contacts are provided by residues G52–D56 and T74–S77. Residue D79 participates in substrate binding. Position 83 (S83) interacts with NAD(+). Position 131 (D131) interacts with substrate. Residues D131 and H211 each contribute to the Zn(2+) site. Substrate is bound at residue H215. H231 is a binding site for Zn(2+).

It belongs to the glycerol-1-phosphate dehydrogenase family. Zn(2+) serves as cofactor.

It is found in the cytoplasm. It catalyses the reaction sn-glycerol 1-phosphate + NAD(+) = dihydroxyacetone phosphate + NADH + H(+). The enzyme catalyses sn-glycerol 1-phosphate + NADP(+) = dihydroxyacetone phosphate + NADPH + H(+). It functions in the pathway membrane lipid metabolism; glycerophospholipid metabolism. Catalyzes the NAD(P)H-dependent reduction of dihydroxyacetonephosphate (DHAP or glycerone phosphate) to glycerol 1-phosphate (G1P). The G1P thus generated is used as the glycerophosphate backbone of phospholipids in the cellular membranes of Archaea. The chain is Glycerol-1-phosphate dehydrogenase [NAD(P)+] from Korarchaeum cryptofilum (strain OPF8).